A 330-amino-acid polypeptide reads, in one-letter code: MATSLRLLDAGPGSLRRWIPTCFAALLLLPPRPNLGYNEDHAEPVCGAPWWSDSLEERHHWPWEVSLQIENEHVCGGALIDQSWVVSAAHCIQGNKEYLVMLGSSTLQPSGSPWALKIPVGDIIMHPKYWGQNFIRSDIALLCLETPVTFNKYIQPICLPEHNFNLKVGMKCWVTGWGQAKQHPSAKLTRSLELWEAEVSIVDNKNCDRVFHKKTFYPQVIPLIRKNMICTTNHRENPCYGDPGGPLACEVHGRWILAGIFSWEKACTKAPNLSVYTRIDKYTGWIKEQVSRGARSGRCRTSCLLFLPWLLQLPVSPGPPHPFLFLLCLC.

A signal peptide spans Met-1–Leu-35. The Peptidase S1 domain occupies Val-45–Ser-291. 4 disulfide bridges follow: Cys-75–Cys-91, Cys-172–Cys-249, Cys-207–Cys-230, and Cys-239–Cys-267. Asn-272 carries N-linked (GlcNAc...) asparagine glycosylation.

This sequence belongs to the peptidase S1 family.

Its subcellular location is the secreted. The chain is Inactive serine protease 45 (Prss45) from Rattus norvegicus (Rat).